The following is a 167-amino-acid chain: Mitochondrial fission 1 protein B (167 aa).

A TPR repeat occupies 92–125; it reads REKLYLLALGYYRSGDFSRSRDCIERCLEVEPES. A helical transmembrane segment spans residues 144 to 164; it reads VIGVGIAVTAVGVVAGIAAAI.

Belongs to the FIS1 family. In terms of assembly, interacts with PEX11A, PEX11B, PEX11C, PEX11D and PEX11E.

Its subcellular location is the mitochondrion outer membrane. The protein localises to the peroxisome membrane. Its function is as follows. Component of the peroxisomal and mitochondrial division machineries. Plays a role in promoting the fission of mitochondria and peroxisomes. In association with PEX11C, PEX11D, PEX11E and DRP3A, is involved in cell cycle-associated constitutive self-replication of preexisting peroxisomes. This is Mitochondrial fission 1 protein B (FIS1B) from Arabidopsis thaliana (Mouse-ear cress).